A 492-amino-acid chain; its full sequence is Propanoyl-CoA:succinate CoA transferase (492 aa).

CoA is bound at residue 260–264 (GVGNI). E286 (5-glutamyl coenzyme A thioester intermediate) is an active-site residue. Positions 376 and 380 each coordinate CoA.

This sequence belongs to the acetyl-CoA hydrolase/transferase family.

The catalysed reaction is propanoyl-CoA + succinate = propanoate + succinyl-CoA. Functionally, catalyzes the transfer of coenzyme A from propionyl-CoA to succinate. Could be part of a pathway that converts succinate to propionate. The sequence is that of Propanoyl-CoA:succinate CoA transferase from Escherichia coli (strain K12).